A 165-amino-acid chain; its full sequence is Chorismate pyruvate-lyase (165 aa).

Positions 35, 77, 115, and 156 each coordinate substrate.

The protein belongs to the UbiC family. Monomer.

It localises to the cytoplasm. It catalyses the reaction chorismate = 4-hydroxybenzoate + pyruvate. Its pathway is cofactor biosynthesis; ubiquinone biosynthesis. Its function is as follows. Removes the pyruvyl group from chorismate, with concomitant aromatization of the ring, to provide 4-hydroxybenzoate (4HB) for the ubiquinone pathway. This Escherichia coli O7:K1 (strain IAI39 / ExPEC) protein is Chorismate pyruvate-lyase.